Reading from the N-terminus, the 301-residue chain is GTPase Era (301 aa).

The Era-type G domain occupies 7–175 (YCGFIAIVGR…AAIVRKHLPE (169 aa)). A G1 region spans residues 15 to 22 (GRPNVGKS). Residue 15 to 22 (GRPNVGKS) participates in GTP binding. The segment at 41–45 (QTTRH) is G2. Residues 62–65 (DTPG) form a G3 region. Residues 62 to 66 (DTPGL) and 124 to 127 (NKVD) each bind GTP. The tract at residues 124 to 127 (NKVD) is G4. The G5 stretch occupies residues 154–156 (ISA). The 78-residue stretch at 206–283 (LGAELPYSVT…HLELWVKVKS (78 aa)) folds into the KH type-2 domain.

The protein belongs to the TRAFAC class TrmE-Era-EngA-EngB-Septin-like GTPase superfamily. Era GTPase family. Monomer.

It is found in the cytoplasm. The protein resides in the cell inner membrane. In terms of biological role, an essential GTPase that binds both GDP and GTP, with rapid nucleotide exchange. Plays a role in 16S rRNA processing and 30S ribosomal subunit biogenesis and possibly also in cell cycle regulation and energy metabolism. This is GTPase Era from Cronobacter sakazakii (strain ATCC BAA-894) (Enterobacter sakazakii).